We begin with the raw amino-acid sequence, 208 residues long: Meiotically up-regulated gene 9 protein (208 aa).

Positions 77 to 114 (VPASNEKAARVSNLKTVPSLKRENKEVNANSKPPVKQQ) are disordered.

Has a role in meiosis. This chain is Meiotically up-regulated gene 9 protein (mug9), found in Schizosaccharomyces pombe (strain 972 / ATCC 24843) (Fission yeast).